Consider the following 172-residue polypeptide: Adrenodoxin homolog, mitochondrial (172 aa).

The transit peptide at 1 to 16 (MLKIVTRAGHTARISN) directs the protein to the mitochondrion. In terms of domain architecture, 2Fe-2S ferredoxin-type spans 61-163 (LKITFILKDG…GIRVALPQMT (103 aa)). Residues Cys-98, Cys-104, Cys-107, and Cys-144 each contribute to the [2Fe-2S] cluster site.

The protein belongs to the adrenodoxin/putidaredoxin family. Interacts in its reduced state with the apo form of ISU1. [2Fe-2S] cluster is required as a cofactor.

The protein localises to the mitochondrion matrix. In terms of biological role, iron-sulfur protein that transfers electrons in a wide variety of metabolic reactions. Involved in heme A biosynthesis and in iron-sulfur cluster assembly. Transfers electrons from adrenodoxin reductase ARH1 to heme A synthase COX15, a heme protein that catalyzes the conversion of heme O to heme A. Required for the de novo synthesis of Fe-S clusters on iron sulfur cluster assembly protein ISU1. Interact in its reduced state with ISU1 to productively deliver electrons for Fe-S cluster synthesis. Essential for coenzyme Q biosynthesis. May transfer the electrons required for the hydroxylation reaction performed by COQ6. The chain is Adrenodoxin homolog, mitochondrial from Saccharomyces cerevisiae (strain ATCC 204508 / S288c) (Baker's yeast).